A 300-amino-acid chain; its full sequence is tRNA pseudouridine synthase B (300 aa).

Residue D44 is the Nucleophile of the active site.

The protein belongs to the pseudouridine synthase TruB family. Type 1 subfamily.

The enzyme catalyses uridine(55) in tRNA = pseudouridine(55) in tRNA. Responsible for synthesis of pseudouridine from uracil-55 in the psi GC loop of transfer RNAs. The protein is tRNA pseudouridine synthase B of Corynebacterium diphtheriae (strain ATCC 700971 / NCTC 13129 / Biotype gravis).